A 307-amino-acid polypeptide reads, in one-letter code: Putative ankyrin repeat protein L59 (307 aa).

ANK repeat units lie at residues 41–67, 68–97, 98–127, 129–157, 158–187, 188–217, 219–247, 248–277, and 279–307; these read LFNK…NLEK, IDNK…DTTN, HNYS…DIRA, DDEA…DVRN, RNDF…DIRT, DDDY…NIHA, GDSA…DIRI, DNDY…DIGA, and NNYA…LKLY.

This Acanthamoeba polyphaga (Amoeba) protein is Putative ankyrin repeat protein L59.